Consider the following 959-residue polypeptide: Glycine dehydrogenase (decarboxylating) (959 aa).

Lys-704 is subject to N6-(pyridoxal phosphate)lysine.

Belongs to the GcvP family. In terms of assembly, the glycine cleavage system is composed of four proteins: P, T, L and H. Pyridoxal 5'-phosphate is required as a cofactor.

The enzyme catalyses N(6)-[(R)-lipoyl]-L-lysyl-[glycine-cleavage complex H protein] + glycine + H(+) = N(6)-[(R)-S(8)-aminomethyldihydrolipoyl]-L-lysyl-[glycine-cleavage complex H protein] + CO2. In terms of biological role, the glycine cleavage system catalyzes the degradation of glycine. The P protein binds the alpha-amino group of glycine through its pyridoxal phosphate cofactor; CO(2) is released and the remaining methylamine moiety is then transferred to the lipoamide cofactor of the H protein. In Parasynechococcus marenigrum (strain WH8102), this protein is Glycine dehydrogenase (decarboxylating).